Here is a 260-residue protein sequence, read N- to C-terminus: Carbonic anhydrase 3 (260 aa).

Position 2 is an N-acetylalanine (alanine 2). The Alpha-carbonic anhydrase domain occupies 3 to 259 (KEWGYASHNG…INNRVVRASF (257 aa)). Phosphoserine is present on residues serine 29, serine 43, serine 48, serine 50, and serine 55. An involved in proton transfer region spans residues 64–67 (KTCR). At threonine 73 the chain carries Phosphothreonine. Zn(2+) is bound by residues histidine 94, histidine 96, and histidine 119. Residue tyrosine 127 is modified to Phosphotyrosine. 2 positions are modified to phosphothreonine: threonine 129 and threonine 176. 2 positions are modified to S-glutathionyl cysteine: cysteine 182 and cysteine 187. 198 to 199 (TT) provides a ligand contact to substrate. Threonine 216 carries the phosphothreonine modification. The residue at position 219 (serine 219) is a Phosphoserine.

Belongs to the alpha-carbonic anhydrase family. Zn(2+) is required as a cofactor. In terms of processing, S-thiolated both by thiol-disulfide exchange with glutathione disulfide and by oxyradical-initiated S-thiolation with reduced glutathione. S-glutathionylated in hepatocytes under oxidative stress. Muscle specific.

It is found in the cytoplasm. It carries out the reaction hydrogencarbonate + H(+) = CO2 + H2O. Activated by proton donors such as imidazole and the dipeptide histidylhistidine. Inhibited by coumarins and sulfonamide derivatives such as acetazolamide. In terms of biological role, reversible hydration of carbon dioxide. The chain is Carbonic anhydrase 3 from Homo sapiens (Human).